The chain runs to 255 residues: Octanoyltransferase (255 aa).

The disordered stretch occupies residues 1-21; the sequence is MCATPVSPSPESPRSAQAGAA. The BPL/LPL catalytic domain maps to 56–242; it reads FETSDEIWLV…SLIANIDGIP (187 aa). Residues 96–103, 173–175, and 186–188 contribute to the substrate site; these read RGGQITYH, ALG, and GVS. Cys204 serves as the catalytic Acyl-thioester intermediate.

It belongs to the LipB family.

It localises to the cytoplasm. It carries out the reaction octanoyl-[ACP] + L-lysyl-[protein] = N(6)-octanoyl-L-lysyl-[protein] + holo-[ACP] + H(+). Its pathway is protein modification; protein lipoylation via endogenous pathway; protein N(6)-(lipoyl)lysine from octanoyl-[acyl-carrier-protein]: step 1/2. Catalyzes the transfer of endogenously produced octanoic acid from octanoyl-acyl-carrier-protein onto the lipoyl domains of lipoate-dependent enzymes. Lipoyl-ACP can also act as a substrate although octanoyl-ACP is likely to be the physiological substrate. The protein is Octanoyltransferase of Paraburkholderia phymatum (strain DSM 17167 / CIP 108236 / LMG 21445 / STM815) (Burkholderia phymatum).